We begin with the raw amino-acid sequence, 404 residues long: Phosphoglycerate kinase (404 aa).

Residues 22-24 (DLN), arginine 37, 60-63 (HLGR), arginine 119, and arginine 156 each bind substrate. ATP is bound by residues lysine 206, glycine 302, glutamate 333, and 359-362 (GGDS).

Belongs to the phosphoglycerate kinase family. In terms of assembly, monomer.

The protein resides in the cytoplasm. The enzyme catalyses (2R)-3-phosphoglycerate + ATP = (2R)-3-phospho-glyceroyl phosphate + ADP. It functions in the pathway carbohydrate degradation; glycolysis; pyruvate from D-glyceraldehyde 3-phosphate: step 2/5. The chain is Phosphoglycerate kinase from Clavibacter sepedonicus (Clavibacter michiganensis subsp. sepedonicus).